The primary structure comprises 465 residues: Ribulose bisphosphate carboxylase large chain (465 aa).

N6,N6,N6-trimethyllysine is present on K4. Residues N113 and T163 each contribute to the substrate site. The Proton acceptor role is filled by K165. K167 lines the substrate pocket. Positions 191, 193, and 194 each coordinate Mg(2+). K191 carries the post-translational modification N6-carboxylysine. H284 (proton acceptor) is an active-site residue. Substrate contacts are provided by R285, H317, and S369.

This sequence belongs to the RuBisCO large chain family. Type I subfamily. As to quaternary structure, heterohexadecamer of 8 large chains and 8 small chains; disulfide-linked. The disulfide link is formed within the large subunit homodimers. The cofactor is Mg(2+). In terms of processing, the disulfide bond which can form in the large chain dimeric partners within the hexadecamer appears to be associated with oxidative stress and protein turnover.

The protein resides in the plastid. It localises to the chloroplast. It carries out the reaction 2 (2R)-3-phosphoglycerate + 2 H(+) = D-ribulose 1,5-bisphosphate + CO2 + H2O. The catalysed reaction is D-ribulose 1,5-bisphosphate + O2 = 2-phosphoglycolate + (2R)-3-phosphoglycerate + 2 H(+). RuBisCO catalyzes two reactions: the carboxylation of D-ribulose 1,5-bisphosphate, the primary event in carbon dioxide fixation, as well as the oxidative fragmentation of the pentose substrate in the photorespiration process. Both reactions occur simultaneously and in competition at the same active site. The polypeptide is Ribulose bisphosphate carboxylase large chain (Nepenthes alata (Winged pitcher plant)).